Consider the following 267-residue polypeptide: Undecaprenyl-diphosphatase (267 aa).

A run of 7 helical transmembrane segments spans residues 1–21 (MPLL…FLPV), 40–60 (GQAI…LFFW), 85–105 (LALG…FLYF), 112–132 (LRSV…LYIA), 188–208 (IAML…GTEV), 219–239 (DMGI…ALMM), and 245–265 (VSFT…LFIA).

This sequence belongs to the UppP family.

Its subcellular location is the cell inner membrane. The enzyme catalyses di-trans,octa-cis-undecaprenyl diphosphate + H2O = di-trans,octa-cis-undecaprenyl phosphate + phosphate + H(+). Functionally, catalyzes the dephosphorylation of undecaprenyl diphosphate (UPP). Confers resistance to bacitracin. The sequence is that of Undecaprenyl-diphosphatase from Ruegeria sp. (strain TM1040) (Silicibacter sp.).